Consider the following 460-residue polypeptide: ATP synthase subunit beta 1 (460 aa).

Position 149–156 (149–156 (GGAGVGKT)) interacts with ATP.

This sequence belongs to the ATPase alpha/beta chains family. In terms of assembly, F-type ATPases have 2 components, CF(1) - the catalytic core - and CF(0) - the membrane proton channel. CF(1) has five subunits: alpha(3), beta(3), gamma(1), delta(1), epsilon(1). CF(0) has three main subunits: a(1), b(2) and c(9-12). The alpha and beta chains form an alternating ring which encloses part of the gamma chain. CF(1) is attached to CF(0) by a central stalk formed by the gamma and epsilon chains, while a peripheral stalk is formed by the delta and b chains.

It localises to the cell inner membrane. The catalysed reaction is ATP + H2O + 4 H(+)(in) = ADP + phosphate + 5 H(+)(out). In terms of biological role, produces ATP from ADP in the presence of a proton gradient across the membrane. The catalytic sites are hosted primarily by the beta subunits. This chain is ATP synthase subunit beta 1, found in Nitrosomonas eutropha (strain DSM 101675 / C91 / Nm57).